A 226-amino-acid chain; its full sequence is 2,3-bisphosphoglycerate-dependent phosphoglycerate mutase (226 aa).

Substrate contacts are provided by residues 8 to 15 (RHGQSVWN), 21 to 22 (TG), Arg-58, 109 to 112 (ERMY), Lys-120, 136 to 137 (RR), and 180 to 181 (GN). The Tele-phosphohistidine intermediate role is filled by His-9. Glu-109 serves as the catalytic Proton donor/acceptor.

Belongs to the phosphoglycerate mutase family. BPG-dependent PGAM subfamily.

The catalysed reaction is (2R)-2-phosphoglycerate = (2R)-3-phosphoglycerate. It functions in the pathway carbohydrate degradation; glycolysis; pyruvate from D-glyceraldehyde 3-phosphate: step 3/5. Its function is as follows. Catalyzes the interconversion of 2-phosphoglycerate and 3-phosphoglycerate. The protein is 2,3-bisphosphoglycerate-dependent phosphoglycerate mutase of Chlamydia muridarum (strain MoPn / Nigg).